Consider the following 250-residue polypeptide: MGQKVHPIGIRLGVVKRHNANWYANPKQYAEYLLKDLQVREFLTKKLKSAMVSNILIERPTGAAKVTISTARPGIVIGKKGEDIEKLQRELTNIMGVPAQVSINEIDRPDLDARLVAEAIASQLEKRVMFRRAMKRAVQNSMRAGAKGIKVEVSGRLGGAEIARTEWYREGRVPLHTLRADIDYATMRAETTYGTIGVKVWIFRGEILGGMKQVMNPAPQEERPAKRGRGRGEGQERRGRRSDRAADKGE.

The 69-residue stretch at 39 to 107 (VREFLTKKLK…PAQVSINEID (69 aa)) folds into the KH type-2 domain. The interval 214–250 (VMNPAPQEERPAKRGRGRGEGQERRGRRSDRAADKGE) is disordered. The span at 220–250 (QEERPAKRGRGRGEGQERRGRRSDRAADKGE) shows a compositional bias: basic and acidic residues.

The protein belongs to the universal ribosomal protein uS3 family. In terms of assembly, part of the 30S ribosomal subunit. Forms a tight complex with proteins S10 and S14.

In terms of biological role, binds the lower part of the 30S subunit head. Binds mRNA in the 70S ribosome, positioning it for translation. This is Small ribosomal subunit protein uS3 from Acinetobacter baylyi (strain ATCC 33305 / BD413 / ADP1).